A 150-amino-acid chain; its full sequence is Mediator of RNA polymerase II transcription subunit 22a (150 aa).

The stretch at 99–127 forms a coiled coil; that stretch reads SLNDHVEQRIAEFDQEAEKTNRLLARIAD.

Belongs to the Mediator complex subunit 22 family. In terms of assembly, component of the Mediator complex.

The protein localises to the nucleus. Component of the Mediator complex, a coactivator involved in the regulated transcription of nearly all RNA polymerase II-dependent genes. Mediator functions as a bridge to convey information from gene-specific regulatory proteins to the basal RNA polymerase II transcription machinery. The Mediator complex, having a compact conformation in its free form, is recruited to promoters by direct interactions with regulatory proteins and serves for the assembly of a functional preinitiation complex with RNA polymerase II and the general transcription factors. This Arabidopsis thaliana (Mouse-ear cress) protein is Mediator of RNA polymerase II transcription subunit 22a (MED22A).